A 276-amino-acid chain; its full sequence is 4-hydroxy-3-methylbut-2-enyl diphosphate reductase (276 aa).

Cys12 serves as a coordination point for [4Fe-4S] cluster. 2 residues coordinate (2E)-4-hydroxy-3-methylbut-2-enyl diphosphate: His36 and His71. Dimethylallyl diphosphate contacts are provided by His36 and His71. The isopentenyl diphosphate site is built by His36 and His71. Cys93 is a binding site for [4Fe-4S] cluster. His121 is a (2E)-4-hydroxy-3-methylbut-2-enyl diphosphate binding site. His121 is a dimethylallyl diphosphate binding site. Residue His121 participates in isopentenyl diphosphate binding. Glu123 (proton donor) is an active-site residue. Residue Thr160 coordinates (2E)-4-hydroxy-3-methylbut-2-enyl diphosphate. Cys188 contacts [4Fe-4S] cluster. 4 residues coordinate (2E)-4-hydroxy-3-methylbut-2-enyl diphosphate: Ser216, Ser217, Asn218, and Ser259. Dimethylallyl diphosphate-binding residues include Ser216, Ser217, Asn218, and Ser259. Residues Ser216, Ser217, Asn218, and Ser259 each contribute to the isopentenyl diphosphate site.

This sequence belongs to the IspH family. It depends on [4Fe-4S] cluster as a cofactor.

The catalysed reaction is isopentenyl diphosphate + 2 oxidized [2Fe-2S]-[ferredoxin] + H2O = (2E)-4-hydroxy-3-methylbut-2-enyl diphosphate + 2 reduced [2Fe-2S]-[ferredoxin] + 2 H(+). The enzyme catalyses dimethylallyl diphosphate + 2 oxidized [2Fe-2S]-[ferredoxin] + H2O = (2E)-4-hydroxy-3-methylbut-2-enyl diphosphate + 2 reduced [2Fe-2S]-[ferredoxin] + 2 H(+). It participates in isoprenoid biosynthesis; dimethylallyl diphosphate biosynthesis; dimethylallyl diphosphate from (2E)-4-hydroxy-3-methylbutenyl diphosphate: step 1/1. Its pathway is isoprenoid biosynthesis; isopentenyl diphosphate biosynthesis via DXP pathway; isopentenyl diphosphate from 1-deoxy-D-xylulose 5-phosphate: step 6/6. Its function is as follows. Catalyzes the conversion of 1-hydroxy-2-methyl-2-(E)-butenyl 4-diphosphate (HMBPP) into a mixture of isopentenyl diphosphate (IPP) and dimethylallyl diphosphate (DMAPP). Acts in the terminal step of the DOXP/MEP pathway for isoprenoid precursor biosynthesis. The polypeptide is 4-hydroxy-3-methylbut-2-enyl diphosphate reductase (Nautilia profundicola (strain ATCC BAA-1463 / DSM 18972 / AmH)).